Here is a 334-residue protein sequence, read N- to C-terminus: Putative ankyrin repeat protein RBE_0347 (334 aa).

ANK repeat units follow at residues 80–90 (EQGINPNIQDS), 91–120 (SGNT…NPNI), 124–161 (SDNT…LKDF), and 162–191 (VGFT…DINV).

The chain is Putative ankyrin repeat protein RBE_0347 from Rickettsia bellii (strain RML369-C).